The sequence spans 199 residues: Dephospho-CoA kinase (199 aa).

Positions 4-199 (VLGITGGIAT…KWLEEQIGKK (196 aa)) constitute a DPCK domain. Residue 12–17 (ATGKST) participates in ATP binding.

Belongs to the CoaE family.

The protein localises to the cytoplasm. The enzyme catalyses 3'-dephospho-CoA + ATP = ADP + CoA + H(+). Its pathway is cofactor biosynthesis; coenzyme A biosynthesis; CoA from (R)-pantothenate: step 5/5. Catalyzes the phosphorylation of the 3'-hydroxyl group of dephosphocoenzyme A to form coenzyme A. The protein is Dephospho-CoA kinase of Enterococcus faecalis (strain ATCC 700802 / V583).